A 643-amino-acid chain; its full sequence is MTNNSGNNSGNSNNPRTENHFDYVRITLASPERIMEWGQRTLPNGQIVGEVTKPETINYRTLKPEMDGLFCEKIFGPSKDWECHCGKYKRVRHRGIVCERCGVEVTESRVRRHRMGFIKLAAPVSHVWYLKGIPSYVAILLDMPLRDVEQIVYFNCYTVLSPGDNSNLFYQQLLTEDEWLEIEDETYAEDSKIISEPIVGIGAEALKYLLKELDLPFIGDGLRQEITGSKGQRRAKLIKRLRVIDNFIATGAKPEWMVLDVVPVIPPDLRPMVQLDGGRFATSDLNDLYRRVINRNNRLGRLKEILAPEIIIRNEKRMLQEAVDALIDNGRRGRTVVGANNRPLKSLSDIIEGKQGRFRQNLLGKRVDYSGRSVIVVGPRLKIHQCGLPKEMAIELFQPFVIHRLIRQNIVNNIKAAKKLIQRADDEVMQVLQEVIEGHPILLNRAPTLHRLGIQAFEPKLVDGRAIQLHPLVCPAFNADFDGDQMAVHVPLSIEAQTEARILMLASANILSPATGEPVITPSQDMVLGIYYLTSSKPAQTQPAFGERGLTFANTYDVISAYDNDRIGLHTWIWVRFSGEVEDDDESEMPIKIETAEDGSYTELWRYRRERFDKDKALVSRYLLTTVGRVIMNTSIMNSINAN.

Residues C83, C85, C98, and C101 each coordinate Zn(2+). Residues D480, D482, and D484 each coordinate Mg(2+).

It belongs to the RNA polymerase beta' chain family. RpoC1 subfamily. As to quaternary structure, in plastids the minimal PEP RNA polymerase catalytic core is composed of four subunits: alpha, beta, beta', and beta''. When a (nuclear-encoded) sigma factor is associated with the core the holoenzyme is formed, which can initiate transcription. Requires Mg(2+) as cofactor. Zn(2+) is required as a cofactor.

The protein localises to the plastid. Its subcellular location is the organellar chromatophore. The enzyme catalyses RNA(n) + a ribonucleoside 5'-triphosphate = RNA(n+1) + diphosphate. Its function is as follows. DNA-dependent RNA polymerase catalyzes the transcription of DNA into RNA using the four ribonucleoside triphosphates as substrates. The protein is DNA-directed RNA polymerase subunit beta' of Paulinella chromatophora.